Consider the following 396-residue polypeptide: B2 bradykinin receptor (396 aa).

The Extracellular portion of the chain corresponds to 1–65; the sequence is MDTRSSLCPK…EWWSWLNAIQ (65 aa). Asparagine 33 and asparagine 44 each carry an N-linked (GlcNAc...) asparagine glycan. The helical transmembrane segment at 66 to 89 threads the bilayer; that stretch reads APFLWVLFLLAALENIFVLSVFCL. Residues 90 to 98 are Cytoplasmic-facing; that stretch reads HKTNCTVAE. A helical transmembrane segment spans residues 99–123; sequence IYLGNLAAADLILACGLPFWAITIA. Topologically, residues 124–136 are extracellular; that stretch reads NNFDWLFGEVLCR. Residues cysteine 135 and cysteine 216 are joined by a disulfide bond. The chain crosses the membrane as a helical span at residues 137–158; sequence VVNTMIYMNLYSSICFLMLVSI. At 159–180 the chain is on the cytoplasmic side; sequence DRYLALVKTMSMGRMRGVRWAK. Residue tyrosine 161 is modified to Phosphotyrosine. The helical transmembrane segment at 181–203 threads the bilayer; that stretch reads LYSLVIWSCTLLLSSPMLVFRTM. Residues 204-226 are Extracellular-facing; sequence KDYREEGHNVTACVIVYPSRSWE. Asparagine 212 carries an N-linked (GlcNAc...) asparagine glycan. The chain crosses the membrane as a helical span at residues 227–253; sequence VFTNMLLNLVGFLLPLSIITFCTVRIM. Over 254–272 the chain is Cytoplasmic; the sequence is QVLRNNEMKKFKEVQTEKK. A helical membrane pass occupies residues 273 to 297; it reads ATVLVLAVLGLFVLCWFPFQISTFL. Residues 298–316 are Extracellular-facing; sequence DTLLRLGVLSGCWNERAVD. Residues 317–340 traverse the membrane as a helical segment; sequence IVTQISSYVAYSNSCLNPLVYVIV. Over 341–396 the chain is Cytoplasmic; that stretch reads GKRFRKKSREVYQAICRKGGCMGESVQMENSMGTLRTSISVDRQIHKLQDWAGNKQ. Tyrosine 352 carries the post-translational modification Phosphotyrosine. Cysteine 356 carries S-palmitoyl cysteine lipidation. Residues serine 365 and serine 371 each carry the phosphoserine modification. Threonine 374 carries the post-translational modification Phosphothreonine. Residues serine 378 and serine 380 each carry the phosphoserine; by GRK6 modification.

This sequence belongs to the G-protein coupled receptor 1 family. Bradykinin receptor subfamily. BDKRB2 sub-subfamily. As to quaternary structure, forms a complex with PECAM1 and GNAQ. Interacts with PECAM1. In terms of processing, diphosphorylation at Ser-365 and Ser-371, at Ser-378 and Ser-380, and at Thr-374 and Ser-380 seem to be correlated pairwise. Post-translationally, palmitoylation at Cys-356 and phosphorylation at Tyr-352 seem to be mutually exclusive. As to expression, uterus, vas deferens, kidney, ileum, heart, testis, lung and brain.

The protein resides in the cell membrane. Receptor for bradykinin. It is associated with G proteins that activate a phosphatidylinositol-calcium second messenger system. This is B2 bradykinin receptor (Bdkrb2) from Rattus norvegicus (Rat).